We begin with the raw amino-acid sequence, 314 residues long: Methionyl-tRNA formyltransferase (314 aa).

110–113 (SLLP) is a binding site for (6S)-5,6,7,8-tetrahydrofolate.

It belongs to the Fmt family.

It carries out the reaction L-methionyl-tRNA(fMet) + (6R)-10-formyltetrahydrofolate = N-formyl-L-methionyl-tRNA(fMet) + (6S)-5,6,7,8-tetrahydrofolate + H(+). Its function is as follows. Attaches a formyl group to the free amino group of methionyl-tRNA(fMet). The formyl group appears to play a dual role in the initiator identity of N-formylmethionyl-tRNA by promoting its recognition by IF2 and preventing the misappropriation of this tRNA by the elongation apparatus. The protein is Methionyl-tRNA formyltransferase of Bacillus anthracis (strain A0248).